Reading from the N-terminus, the 283-residue chain is 4-diphosphocytidyl-2-C-methyl-D-erythritol kinase (283 aa).

The active site involves Lys10. An ATP-binding site is contributed by 95-105 (PVAAGLGGGSS). Residue Asp137 is part of the active site.

The protein belongs to the GHMP kinase family. IspE subfamily.

The catalysed reaction is 4-CDP-2-C-methyl-D-erythritol + ATP = 4-CDP-2-C-methyl-D-erythritol 2-phosphate + ADP + H(+). The protein operates within isoprenoid biosynthesis; isopentenyl diphosphate biosynthesis via DXP pathway; isopentenyl diphosphate from 1-deoxy-D-xylulose 5-phosphate: step 3/6. Catalyzes the phosphorylation of the position 2 hydroxy group of 4-diphosphocytidyl-2C-methyl-D-erythritol. The sequence is that of 4-diphosphocytidyl-2-C-methyl-D-erythritol kinase from Limosilactobacillus reuteri (strain DSM 20016) (Lactobacillus reuteri).